The sequence spans 255 residues: 5-oxoprolinase subunit A (255 aa).

This sequence belongs to the LamB/PxpA family. Forms a complex composed of PxpA, PxpB and PxpC.

The enzyme catalyses 5-oxo-L-proline + ATP + 2 H2O = L-glutamate + ADP + phosphate + H(+). Its function is as follows. Catalyzes the cleavage of 5-oxoproline to form L-glutamate coupled to the hydrolysis of ATP to ADP and inorganic phosphate. This is 5-oxoprolinase subunit A from Pyrococcus furiosus (strain ATCC 43587 / DSM 3638 / JCM 8422 / Vc1).